A 335-amino-acid chain; its full sequence is Urokinase plasminogen activator surface receptor (335 aa).

An N-terminal signal peptide occupies residues 1 to 22; it reads MGHPLLLPLLLLLHTCVPASWG. UPAR/Ly6 domains are found at residues 23–114, 115–213, and 214–305; these read LRCM…RSRY, LECI…PQNG, and HQCY…YRKG. 3 disulfide bridges follow: C25-C46, C28-C34, and C39-C67. N74 carries an N-linked (GlcNAc...) asparagine glycan. 11 disulfides stabilise this stretch: C93-C98, C117-C144, C120-C127, C137-C169, C175-C192, C193-C198, C216-C244, C219-C227, C237-C263, C269-C287, and C288-C293. N184, N194, N222, N255, and N284 each carry an N-linked (GlcNAc...) asparagine glycan. The GPI-anchor amidated glycine moiety is linked to residue G305. A propeptide spans 306–335 (removed in mature form); it reads AAPQPGPAHLSLTITLLMTARLWGGTLLWT.

Monomer. Interacts (via the UPAR/Ly6 domains) with SRPX2. Interacts with MRC2. Interacts with FAP (seprase); the interaction occurs at the cell surface of invadopodia membrane. Interacts with SORL1 (via N-terminal ectodomain); this interaction decreases PLAUR internalization. The ternary complex composed of PLAUR-PLAU-SERPINE1 also interacts with SORL1.

It is found in the cell membrane. The protein localises to the cell projection. It localises to the invadopodium membrane. Its function is as follows. Acts as a receptor for urokinase plasminogen activator. Plays a role in localizing and promoting plasmin formation. Mediates the proteolysis-independent signal transduction activation effects of U-PA. It is subject to negative-feedback regulation by U-PA which cleaves it into an inactive form. This Macaca fascicularis (Crab-eating macaque) protein is Urokinase plasminogen activator surface receptor (PLAUR).